Consider the following 253-residue polypeptide: Sulfate transporter CysZ (253 aa).

Helical transmembrane passes span 31-51 (FVIL…WWLF), 72-92 (LSYL…GYFF), 151-171 (IVLL…PVLW), and 222-242 (IPVL…AMWV).

This sequence belongs to the CysZ family.

The protein resides in the cell inner membrane. Functionally, possibly involved in sulfate transport. Its function is as follows. High affinity, high specificity proton-dependent sulfate transporter, which mediates sulfate uptake. Provides the sulfur source for the cysteine synthesis pathway. The sequence is that of Sulfate transporter CysZ from Salmonella typhimurium (strain LT2 / SGSC1412 / ATCC 700720).